Reading from the N-terminus, the 500-residue chain is Cytochrome c-552 (500 aa).

Positions 1–24 are cleaved as a signal peptide; sequence MKFLIKSLAVATISILGCLQTALA. Residues His102, Cys130, Cys133, Lys134, Cys168, Cys171, His172, Cys217, Cys220, and His221 each contribute to the heme c site. 4 residues coordinate Ca(2+): Glu223, Tyr224, Lys268, and Gln270. Tyr224 contacts substrate. His271 serves as a coordination point for substrate. 9 residues coordinate heme c: His282, Cys289, Cys292, His293, His308, Cys321, Cys324, His325, and His400. A disordered region spans residues 477 to 500; the sequence is ARAKGLLPAEEADKPVAAPKAEAK.

This sequence belongs to the cytochrome c-552 family. It depends on Ca(2+) as a cofactor. Requires heme c as cofactor.

It localises to the periplasm. The enzyme catalyses 6 Fe(III)-[cytochrome c] + NH4(+) + 2 H2O = 6 Fe(II)-[cytochrome c] + nitrite + 8 H(+). Its pathway is nitrogen metabolism; nitrate reduction (assimilation). Catalyzes the reduction of nitrite to ammonia, consuming six electrons in the process. This Mannheimia haemolytica (Pasteurella haemolytica) protein is Cytochrome c-552.